The chain runs to 272 residues: Phosphatidylglycerol--prolipoprotein diacylglyceryl transferase (272 aa).

The next 4 membrane-spanning stretches (helical) occupy residues 21-41, 60-80, 101-121, and 131-151; these read IAVHWYGIMYALALLSAIFVA, YIWWAEIGVILGARLGYVLFY, GVYAGISGMSYHGAFFGFIIA, and VSFWFITDIAVLGVSAAYIFG. Arginine 152 provides a ligand contact to a 1,2-diacyl-sn-glycero-3-phospho-(1'-sn-glycerol). 3 helical membrane-spanning segments follow: residues 181-201, 209-229, and 244-264; these read PSQIYEAILEGLFVFLILAFY, GQLALMYGILYAIARIIAEFF, and LTMGILQSLIILIICVGFYVV.

Belongs to the Lgt family.

It is found in the cell inner membrane. The catalysed reaction is L-cysteinyl-[prolipoprotein] + a 1,2-diacyl-sn-glycero-3-phospho-(1'-sn-glycerol) = an S-1,2-diacyl-sn-glyceryl-L-cysteinyl-[prolipoprotein] + sn-glycerol 1-phosphate + H(+). It functions in the pathway protein modification; lipoprotein biosynthesis (diacylglyceryl transfer). Catalyzes the transfer of the diacylglyceryl group from phosphatidylglycerol to the sulfhydryl group of the N-terminal cysteine of a prolipoprotein, the first step in the formation of mature lipoproteins. In Aliarcobacter butzleri (strain RM4018) (Arcobacter butzleri), this protein is Phosphatidylglycerol--prolipoprotein diacylglyceryl transferase.